Consider the following 176-residue polypeptide: ATP-dependent protease subunit HslV (176 aa).

Thr4 is an active-site residue. Na(+) contacts are provided by Gly158, Cys161, and Thr164.

The protein belongs to the peptidase T1B family. HslV subfamily. A double ring-shaped homohexamer of HslV is capped on each side by a ring-shaped HslU homohexamer. The assembly of the HslU/HslV complex is dependent on binding of ATP.

It localises to the cytoplasm. The catalysed reaction is ATP-dependent cleavage of peptide bonds with broad specificity.. Its activity is regulated as follows. Allosterically activated by HslU binding. Functionally, protease subunit of a proteasome-like degradation complex believed to be a general protein degrading machinery. The sequence is that of ATP-dependent protease subunit HslV from Rhizobium meliloti (strain 1021) (Ensifer meliloti).